The following is a 157-amino-acid chain: Protein BeeE (157 aa).

Belongs to the phage portal family.

This is Protein BeeE (beeE) from Escherichia coli (strain K12).